A 383-amino-acid chain; its full sequence is Pyruvate synthase subunit PorA (383 aa).

As to quaternary structure, heterotetramer of one alpha, one beta, one delta and one gamma chain.

It catalyses the reaction 2 oxidized [2Fe-2S]-[ferredoxin] + pyruvate + CoA = 2 reduced [2Fe-2S]-[ferredoxin] + acetyl-CoA + CO2 + H(+). The sequence is that of Pyruvate synthase subunit PorA (porA) from Methanothermobacter thermautotrophicus (strain ATCC 29096 / DSM 1053 / JCM 10044 / NBRC 100330 / Delta H) (Methanobacterium thermoautotrophicum).